We begin with the raw amino-acid sequence, 536 residues long: Phosphoenolpyruvate carboxykinase (ATP) (536 aa).

Substrate-binding residues include arginine 61, tyrosine 195, and lysine 201. ATP is bound by residues lysine 201, histidine 220, and 236–244 (GLSGTGKTT). Mn(2+) contacts are provided by lysine 201 and histidine 220. Position 257 (aspartate 257) interacts with Mn(2+). ATP is bound by residues glutamate 285, arginine 322, and threonine 447. Arginine 322 provides a ligand contact to substrate.

It belongs to the phosphoenolpyruvate carboxykinase (ATP) family. It depends on Mn(2+) as a cofactor.

The protein resides in the cytoplasm. It catalyses the reaction oxaloacetate + ATP = phosphoenolpyruvate + ADP + CO2. Its pathway is carbohydrate biosynthesis; gluconeogenesis. In terms of biological role, involved in the gluconeogenesis. Catalyzes the conversion of oxaloacetate (OAA) to phosphoenolpyruvate (PEP) through direct phosphoryl transfer between the nucleoside triphosphate and OAA. This is Phosphoenolpyruvate carboxykinase (ATP) from Rhizobium meliloti (strain 1021) (Ensifer meliloti).